A 340-amino-acid chain; its full sequence is Nuclear hormone receptor family member nhr-197 (340 aa).

The nuclear receptor DNA-binding region spans 1-75 (MNCVVCSGRA…VGMTLAPLND (75 aa)). NR C4-type zinc fingers lie at residues 3 to 23 (CVVC…CFAC) and 39 to 58 (CKRI…CRAC). One can recognise an NR LBD domain in the interval 98–337 (KNDKNYSHFV…KRIMQDLFSN (240 aa)).

Belongs to the nuclear hormone receptor family.

The protein resides in the nucleus. Functionally, orphan nuclear receptor. The protein is Nuclear hormone receptor family member nhr-197 (nhr-197) of Caenorhabditis elegans.